Here is an 88-residue protein sequence, read N- to C-terminus: Conotoxin Ca8.3 (88 aa).

The signal sequence occupies residues 1–21 (MMLKMGAMFVLLLLFILPSSQ). The propeptide occupies 22–46 (QEGDVQARKTHLKSGFYGTLAMSTR).

Belongs to the conotoxin S superfamily. In terms of processing, contains 5 disulfide bonds. As to expression, expressed by the venom duct.

It localises to the secreted. This is Conotoxin Ca8.3 from Conus caracteristicus (Characteristic cone).